The following is a 255-amino-acid chain: uncharacterized protein (255 aa).

Positions 13, 37, 55, 81, 148, 152, 180, and 182 each coordinate NADP(+). Catalysis depends on Tyr148, which acts as the Proton donor. The Lowers pKa of active site Tyr role is filled by Lys152.

This sequence belongs to the short-chain dehydrogenases/reductases (SDR) family.

In terms of biological role, involved in osmoadaptation. This is an uncharacterized protein from Emericella nidulans (strain FGSC A4 / ATCC 38163 / CBS 112.46 / NRRL 194 / M139) (Aspergillus nidulans).